Reading from the N-terminus, the 582-residue chain is Inositol transporter 4 (582 aa).

The next 12 membrane-spanning stretches (helical) occupy residues 35–55 (GIGG…LLFI), 70–90 (STIV…GGWI), 105–125 (VLFL…VIIV), 128–148 (IFVG…ISEA), 162–182 (GLLI…FVHT), 188–208 (WMLG…LSLP), 290–310 (FVGI…AGYA), 317–337 (ALSL…MMFV), 345–365 (LMII…TVFS), 456–476 (FGFL…PGMG), 494–514 (LGGG…SESF), and 525–545 (GTFL…WLLV).

It belongs to the major facilitator superfamily. Sugar transporter (TC 2.A.1.1) family. As to expression, highly expressed in pollen and phloem companion cells.

The protein localises to the cell membrane. In terms of biological role, plasma membrane inositol-proton symporter. Mediates high-affinity myoinositol-proton symport across the plasma membrane. Active with myoinositol, scylloinositol and D-chiroinositol. Low activity with mucoinositol and alloinositol. In Arabidopsis thaliana (Mouse-ear cress), this protein is Inositol transporter 4 (INT4).